A 74-amino-acid polypeptide reads, in one-letter code: U3-agatoxin-Ao1f (74 aa).

The N-terminal stretch at 1 to 20 (MRAIISLLLISTMVFGVIEA) is a signal peptide. Positions 21 to 34 (VSLEEGLKIFEGER) are excised as a propeptide. 4 disulfide bridges follow: C37–C53, C44–C58, C52–C68, and C60–C66. Asparagine amide is present on N72.

The protein belongs to the neurotoxin 07 (Beta/delta-agtx) family. 03 (aga-4) subfamily. Aga sub-subfamily. As to expression, expressed by the venom gland.

The protein resides in the secreted. In terms of biological role, insecticidal neurotoxin that modulates the insect Nav channel (DmNaV1/tipE (para/tipE)) in a unique manner, with both the activation and inactivation processes being affected. The voltage dependence of activation is shifted toward more hyperpolarized potentials (analogous to site 4 toxins) and a non-inactivating persistent sodium current is induced (site 3-like action). Interestingly, both effects take place in a voltage-dependent manner, producing a bell-shaped curve between -80 and 0 mV. In vivo, induces an irreversible spastic paralysis when injected into insects. In Agelena orientalis (Funnel-web spider), this protein is U3-agatoxin-Ao1f.